The primary structure comprises 404 residues: Cysteine desulfurase IscS (404 aa).

Pyridoxal 5'-phosphate contacts are provided by residues 75 to 76 (AT), asparagine 155, glutamine 183, and 203 to 205 (SGH). At lysine 206 the chain carries N6-(pyridoxal phosphate)lysine. Threonine 243 serves as a coordination point for pyridoxal 5'-phosphate. Cysteine 328 serves as the catalytic Cysteine persulfide intermediate. Cysteine 328 is a binding site for [2Fe-2S] cluster.

Belongs to the class-V pyridoxal-phosphate-dependent aminotransferase family. NifS/IscS subfamily. In terms of assembly, homodimer. Forms a heterotetramer with IscU, interacts with other sulfur acceptors. Requires pyridoxal 5'-phosphate as cofactor.

Its subcellular location is the cytoplasm. It carries out the reaction (sulfur carrier)-H + L-cysteine = (sulfur carrier)-SH + L-alanine. It participates in cofactor biosynthesis; iron-sulfur cluster biosynthesis. Its function is as follows. Master enzyme that delivers sulfur to a number of partners involved in Fe-S cluster assembly, tRNA modification or cofactor biosynthesis. Catalyzes the removal of elemental sulfur atoms from cysteine to produce alanine. Functions as a sulfur delivery protein for Fe-S cluster synthesis onto IscU, an Fe-S scaffold assembly protein, as well as other S acceptor proteins. The polypeptide is Cysteine desulfurase IscS (Shewanella baltica (strain OS223)).